The primary structure comprises 232 residues: Uracil-DNA glycosylase (232 aa).

The Proton acceptor role is filled by aspartate 64.

It belongs to the uracil-DNA glycosylase (UDG) superfamily. UNG family.

It is found in the cytoplasm. It carries out the reaction Hydrolyzes single-stranded DNA or mismatched double-stranded DNA and polynucleotides, releasing free uracil.. Its function is as follows. Excises uracil residues from the DNA which can arise as a result of misincorporation of dUMP residues by DNA polymerase or due to deamination of cytosine. The protein is Uracil-DNA glycosylase of Shouchella clausii (strain KSM-K16) (Alkalihalobacillus clausii).